The primary structure comprises 569 residues: AsmA family protein YicH (569 aa).

Over 1–6 (MKFIGK) the chain is Cytoplasmic. Residues 7 to 27 (LLLYILIALLVAIAGLYFLLQ) form a helical membrane-spanning segment. Over 28–569 (TRWGAEHISA…GEVTSTEPVR (542 aa)) the chain is Periplasmic.

Belongs to the AsmA family.

The protein localises to the cell inner membrane. The protein is AsmA family protein YicH (yicH) of Escherichia coli (strain K12).